Reading from the N-terminus, the 197-residue chain is RNA chaperone ProQ (197 aa).

Positions 115-138 are disordered; sequence RAAAKKAQQKKHPRKPANKNLKKE. Residues 117–131 show a composition bias toward basic residues; the sequence is AAKKAQQKKHPRKPA.

Belongs to the ProQ family.

The protein localises to the cytoplasm. Functionally, RNA chaperone with significant RNA binding, RNA strand exchange and RNA duplexing activities. In Haemophilus influenzae (strain ATCC 51907 / DSM 11121 / KW20 / Rd), this protein is RNA chaperone ProQ.